Reading from the N-terminus, the 317-residue chain is Serpentine receptor class delta-26 (317 aa).

The next 7 membrane-spanning stretches (helical) occupy residues 5 to 25 (LLHT…MYLA), 38 to 58 (AIIT…FFVM), 83 to 103 (ACYV…IWMI), 122 to 142 (SLVF…AAWI), 176 to 196 (ITLI…YAWI), 227 to 247 (FQVF…AMFG), and 258 to 278 (LVSI…ILFV).

This sequence belongs to the nematode receptor-like protein srd family.

It localises to the membrane. The sequence is that of Serpentine receptor class delta-26 (srd-26) from Caenorhabditis elegans.